A 150-amino-acid chain; its full sequence is Large ribosomal subunit protein bL9 (150 aa).

It belongs to the bacterial ribosomal protein bL9 family.

Binds to the 23S rRNA. This Shewanella halifaxensis (strain HAW-EB4) protein is Large ribosomal subunit protein bL9.